Reading from the N-terminus, the 254-residue chain is Acetyl-coenzyme A carboxylase carboxyl transferase subunit beta (254 aa).

The 254-residue stretch at 1 to 254 folds into the CoA carboxyltransferase N-terminal domain; sequence MWLRCPHCHQ…LLKTGSVANE (254 aa). Residues Cys-5, Cys-8, Cys-23, and Cys-26 each contribute to the Zn(2+) site. The C4-type zinc-finger motif lies at 5-26; it reads CPHCHQLLFAKQLTQYAVCPNC.

Belongs to the AccD/PCCB family. As to quaternary structure, acetyl-CoA carboxylase is a heterohexamer composed of biotin carboxyl carrier protein (AccB), biotin carboxylase (AccC) and two subunits each of ACCase subunit alpha (AccA) and ACCase subunit beta (AccD). Zn(2+) is required as a cofactor.

It localises to the cytoplasm. The catalysed reaction is N(6)-carboxybiotinyl-L-lysyl-[protein] + acetyl-CoA = N(6)-biotinyl-L-lysyl-[protein] + malonyl-CoA. It participates in lipid metabolism; malonyl-CoA biosynthesis; malonyl-CoA from acetyl-CoA: step 1/1. Functionally, component of the acetyl coenzyme A carboxylase (ACC) complex. Biotin carboxylase (BC) catalyzes the carboxylation of biotin on its carrier protein (BCCP) and then the CO(2) group is transferred by the transcarboxylase to acetyl-CoA to form malonyl-CoA. This chain is Acetyl-coenzyme A carboxylase carboxyl transferase subunit beta, found in Limosilactobacillus reuteri (strain DSM 20016) (Lactobacillus reuteri).